Consider the following 753-residue polypeptide: Protein transport protein SEC23-1 (753 aa).

Zn(2+)-binding residues include Cys56, Cys61, Cys80, and Cys83.

It belongs to the SEC23/SEC24 family. SEC23 subfamily. The COPII coat is composed of at least 5 proteins: the SEC23/24 complex, the SEC13/31 complex, and the protein SAR1.

The protein localises to the cytoplasm. It is found in the cytoplasmic vesicle. Its subcellular location is the COPII-coated vesicle membrane. It localises to the endoplasmic reticulum membrane. The protein resides in the golgi apparatus membrane. Functionally, component of the coat protein complex II (COPII) which promotes the formation of transport vesicles from the endoplasmic reticulum (ER). The coat has two main functions, the physical deformation of the endoplasmic reticulum membrane into vesicles and the selection of cargo molecules. The chain is Protein transport protein SEC23-1 (SEC231) from Candida glabrata (strain ATCC 2001 / BCRC 20586 / JCM 3761 / NBRC 0622 / NRRL Y-65 / CBS 138) (Yeast).